The following is a 94-amino-acid chain: Conotoxin Cal22a (94 aa).

Positions 1 to 24 (MMSTKGITLFLCLLLLALATSVNG) are cleaved as a signal peptide. Positions 25–44 (GQGTRRSRMTRALHGGRPSA) are excised as a propeptide.

Post-translationally, contains 4 disulfide bonds. As to expression, expressed by the venom duct.

It localises to the secreted. Probable neurotoxin with unknown target. Possibly targets ion channels. The protein is Conotoxin Cal22a of Californiconus californicus (California cone).